The chain runs to 360 residues: Biotin synthase 2 (360 aa).

The Radical SAM core domain maps to 53 to 280; it reads RRVKLNFLVN…TAEVRLSGGR (228 aa). Residues C68, C72, and C75 each contribute to the [4Fe-4S] cluster site. Residues C112, C145, C205, and R275 each contribute to the [2Fe-2S] cluster site.

Belongs to the radical SAM superfamily. Biotin synthase family. As to quaternary structure, homodimer. Requires [4Fe-4S] cluster as cofactor. It depends on [2Fe-2S] cluster as a cofactor.

The catalysed reaction is (4R,5S)-dethiobiotin + (sulfur carrier)-SH + 2 reduced [2Fe-2S]-[ferredoxin] + 2 S-adenosyl-L-methionine = (sulfur carrier)-H + biotin + 2 5'-deoxyadenosine + 2 L-methionine + 2 oxidized [2Fe-2S]-[ferredoxin]. Its pathway is cofactor biosynthesis; biotin biosynthesis; biotin from 7,8-diaminononanoate: step 2/2. In terms of biological role, catalyzes the conversion of dethiobiotin (DTB) to biotin by the insertion of a sulfur atom into dethiobiotin via a radical-based mechanism. The sequence is that of Biotin synthase 2 from Frankia casuarinae (strain DSM 45818 / CECT 9043 / HFP020203 / CcI3).